The following is a 510-amino-acid chain: JmjC domain-containing histone demethylation protein 1 (510 aa).

The PHD-type zinc finger occupies 2 to 53; it reads PNRCDFCTSSSTKDKQQWTQCDGCDRWVHDVCVSITDPVSYAKYHCPTCTKT. One can recognise a JmjC domain in the interval 216-365; it reads TLVRELDLVD…TQIDIAGIEV (150 aa). Thr255 is a binding site for substrate. The Fe cation site is built by His258 and Asp260. Lys275 lines the substrate pocket. Residue His333 coordinates Fe cation. The interval 475 to 510 is disordered; the sequence is KGESKEKHKIESQLPEEKILQGSKLESKEEVQTENF. The segment covering 477 to 510 has biased composition (basic and acidic residues); sequence ESKEKHKIESQLPEEKILQGSKLESKEEVQTENF.

The protein belongs to the JHDM1 histone demethylase family. The cofactor is Fe(2+).

The protein localises to the nucleus. It carries out the reaction N(6),N(6)-dimethyl-L-lysyl(36)-[histone H3] + 2 2-oxoglutarate + 2 O2 = L-lysyl(36)-[histone H3] + 2 formaldehyde + 2 succinate + 2 CO2. Functionally, histone demethylase that specifically demethylates 'Lys-36' of histone H3, thereby playing a central role in histone code. The polypeptide is JmjC domain-containing histone demethylation protein 1 (JHD1) (Yarrowia lipolytica (strain CLIB 122 / E 150) (Yeast)).